Here is a 295-residue protein sequence, read N- to C-terminus: Ribosomal protein L11 methyltransferase (295 aa).

4 residues coordinate S-adenosyl-L-methionine: Thr-150, Gly-171, Asp-193, and Asn-232.

This sequence belongs to the methyltransferase superfamily. PrmA family.

It is found in the cytoplasm. It carries out the reaction L-lysyl-[protein] + 3 S-adenosyl-L-methionine = N(6),N(6),N(6)-trimethyl-L-lysyl-[protein] + 3 S-adenosyl-L-homocysteine + 3 H(+). In terms of biological role, methylates ribosomal protein L11. The chain is Ribosomal protein L11 methyltransferase from Methylobacillus flagellatus (strain ATCC 51484 / DSM 6875 / VKM B-1610 / KT).